The primary structure comprises 651 residues: MQSFRKIWNKPRPDDWMPLARFYYADSALNDIASELDSFDGRRDPDRCNALVTRLRVAQDRVLHIITEMLIHLYPREQDRACRDFRIKFPDEILHDTLPGQLWFGAECLSAGSNIIDHETESDLIRPLAKEVTKQLDILRDLLKNQSLRDPSAYNPVIKENLLKFDKLFAEFEYQYVSAMVPVKSVKEHDSQLDVAVLFSEVLSLALEKDLITQDLIDYCDPSVMIAIPRLGIVWGLLVYSEGALNVDVPAENLSEMFRPFYSLLVKIRNLLRILTPVELTRLETVLCKGETAVPEDSSSKLTMSDFRTNATDEEKAKNNQRVWMCDMPSDSTSSLDSDLRDSASEATSLASSGLTSPSSGSEDNLNRMVDKSDEELDDDVIETASSEENESDSNNENVEMVASSGDSSETESNSKENEEDVDEQATLQALAHETAEQLVAIKKKHEKHSKIIIPMQNEPRTLIDPKNLRSRFRSSEDLVHRLFVCIAGVADQLQTNYSSEIRKVLKIILQPSEVIPVYEVVNAQVANNSTEGEETGVEAQETLPLPAFMGVRWVPDEDCEQCTACSMPFNFVRRRHHCRNCGRIFCHKCSCNSISIPEHGYDRKVRVCNLCYVHRLNPFGCNEQSQASENNTGISSVAEQSSAQATSASS.

Residues 294–425 are disordered; that stretch reads VPEDSSSKLT…KENEEDVDEQ (132 aa). Over residues 300 to 310 the composition is skewed to polar residues; that stretch reads SKLTMSDFRTN. Residues 345 to 363 show a composition bias toward low complexity; the sequence is SEATSLASSGLTSPSSGSE. Residues 373–394 are compositionally biased toward acidic residues; that stretch reads SDEELDDDVIETASSEENESDS. Over residues 395-412 the composition is skewed to low complexity; that stretch reads NNENVEMVASSGDSSETE. Residues 557–617 form an FYVE-type zinc finger; it reads DEDCEQCTAC…VCNLCYVHRL (61 aa). Positions 563, 566, 579, 582, 587, 590, 609, and 612 each coordinate Zn(2+).

Belongs to the lst-2 family.

Negative regulator of epidermal growth factor receptor (EGFR) signaling. This is Lateral signaling target protein 2 (lst-2) from Caenorhabditis briggsae.